The sequence spans 100 residues: MELTPREKDKLLIFTAALLAERRKARGLKLNYPEAVALITAAIMEGARDGRTVAELMHEGTTVLTREDVMDGIAEMIPEIQVEATFPDGTKLVTVHHPIV.

Belongs to the urease gamma subunit family. Heterotrimer of UreA (gamma), UreB (beta) and UreC (alpha) subunits. Three heterotrimers associate to form the active enzyme.

It is found in the cytoplasm. The catalysed reaction is urea + 2 H2O + H(+) = hydrogencarbonate + 2 NH4(+). The protein operates within nitrogen metabolism; urea degradation; CO(2) and NH(3) from urea (urease route): step 1/1. The chain is Urease subunit gamma from Cupriavidus taiwanensis (strain DSM 17343 / BCRC 17206 / CCUG 44338 / CIP 107171 / LMG 19424 / R1) (Ralstonia taiwanensis (strain LMG 19424)).